The chain runs to 330 residues: HPr kinase/phosphorylase (330 aa).

Residues H153 and K174 contribute to the active site. Position 168–175 (168–175) interacts with ATP; it reads GKSGLGKS. S175 is a binding site for Mg(2+). The active-site Proton acceptor; for phosphorylation activity. Proton donor; for dephosphorylation activity is the D192. An important for the catalytic mechanism of both phosphorylation and dephosphorylation region spans residues 217–226; that stretch reads MEIRGLGVVD. A Mg(2+)-binding site is contributed by E218. R259 is an active-site residue. The interval 280–285 is important for the catalytic mechanism of dephosphorylation; it reads PIFPGK.

The protein belongs to the HPrK/P family. In terms of assembly, homohexamer. Mg(2+) is required as a cofactor.

It carries out the reaction [HPr protein]-L-serine + ATP = [HPr protein]-O-phospho-L-serine + ADP + H(+). The enzyme catalyses [HPr protein]-O-phospho-L-serine + phosphate + H(+) = [HPr protein]-L-serine + diphosphate. Catalyzes the ATP- as well as the pyrophosphate-dependent phosphorylation of a specific serine residue in HPr, a phosphocarrier protein of the phosphoenolpyruvate-dependent sugar phosphotransferase system (PTS). HprK/P also catalyzes the pyrophosphate-producing, inorganic phosphate-dependent dephosphorylation (phosphorolysis) of seryl-phosphorylated HPr (P-Ser-HPr). This chain is HPr kinase/phosphorylase, found in Chlorobium limicola (strain DSM 245 / NBRC 103803 / 6330).